The primary structure comprises 555 residues: DNA repair and recombination protein rhm52 (555 aa).

A DNA-binding region spans residues 148-152 (KRALR). Disordered regions lie at residues 197-232 (VVAE…DSFD) and 251-555 (HPDE…MKLN). Over residues 260–276 (NSHASGSSGNTGASTTN) the composition is skewed to low complexity. 2 stretches are compositionally biased toward polar residues: residues 283-300 (SGNQ…SRMN) and 312-334 (TPNH…QNNH). Composition is skewed to low complexity over residues 354–375 (NNNN…GPQQ) and 382–404 (NGAA…AVAR). The span at 468–478 (DNPSNNAGNGV) shows a compositional bias: polar residues. Positions 479 to 490 (QNQPQKPQPSQQ) are enriched in low complexity. Positions 491–500 (RGSILNPQFD) are enriched in polar residues. Residues 536 to 547 (PNGTSNGNGTPG) are compositionally biased toward low complexity.

It belongs to the RAD52 family. As to quaternary structure, part of a complex that includes RAD51, RAD52 and RAD59.

Its subcellular location is the nucleus. Functionally, involved in DNA double-strand break (DSB) repair and recombination. Promotes the annealing of complementary single-stranded DNA and by stimulation of the RAD51 recombinase. In Pyricularia oryzae (strain 70-15 / ATCC MYA-4617 / FGSC 8958) (Rice blast fungus), this protein is DNA repair and recombination protein rhm52 (RHM52).